Here is a 600-residue protein sequence, read N- to C-terminus: Methylenetetrahydrofolate reductase 2 (600 aa).

The active-site Proton donor/acceptor is Glu22. Residues 22-27 (EYFVPK) and 54-55 (TW) contribute to the NAD(+) site. Residues 54-55 (TW), His84, 114-116 (RGD), 133-134 (YA), Tyr156, Asp171, and Lys178 contribute to the FAD site. Asp116 contacts substrate. Substrate is bound by residues Gln189 and Tyr282.

The protein belongs to the methylenetetrahydrofolate reductase family. The cofactor is FAD.

The enzyme catalyses (6S)-5-methyl-5,6,7,8-tetrahydrofolate + NADP(+) = (6R)-5,10-methylene-5,6,7,8-tetrahydrofolate + NADPH + H(+). Its pathway is one-carbon metabolism; tetrahydrofolate interconversion. In Saccharomyces cerevisiae (strain ATCC 204508 / S288c) (Baker's yeast), this protein is Methylenetetrahydrofolate reductase 2 (MET13).